The sequence spans 588 residues: MMGDSHSSFTTTTDEHLYNQFSPGRRKNDFPAASSSSSSPNLRRSPNRTVSSPRVQQKPITIFDQIVDWFQAEISVRKRLAGAACGYLSTIFFIVTVSILKLTIWAPFSSVQDSLAWWIYPNAWASIIFVGIASVAMSLFSIIKFCKVDQLPRLAATDTFALAGVALEFVTRLTFVYTAFCVADFSFSREFAFVAISLAIAISSALVVFRSDYQLNFSHIQVNSVKTLIDFGTSLPYANISEICGIDAAISYTAAVALILVVGPMVSGFSAWWLLLNIPFHVVLFGLCFTQQFYSKISMKIVNQIVMKPISFPFPPPYTVHSPTPEQTRTLPNVIETDDSLLKFFALHDLRTIAWNDEKRRVDVFSLSQPGKHPRNWKAVSLPCVRMLDELCSRMTVSAARLVGYSWDDHDIENEDVPRDALLMPRKMREMAYRGTGQSRQQKSMAPIRSHNTQTVGLLSKISNFLGFGVTEKLVISRFDAHMNAYAAEALYMLVVDSMGEDRFGVVQKDLKDLITLLCKLIAAIDTYERAKASVADKSDVTFLRIVDASLKSSLQRVVTTFGSHLSSLNLPEEHSRTIRMICLTDEL.

The segment covering 1–12 has biased composition (polar residues); that stretch reads MMGDSHSSFTTT. A disordered region spans residues 1-55; the sequence is MMGDSHSSFTTTTDEHLYNQFSPGRRKNDFPAASSSSSSPNLRRSPNRTVSSPRV. The Cytoplasmic portion of the chain corresponds to 1 to 79; the sequence is MMGDSHSSFT…FQAEISVRKR (79 aa). The segment covering 31–48 has biased composition (low complexity); the sequence is PAASSSSSSPNLRRSPNR. Residues 80–100 traverse the membrane as a helical segment; it reads LAGAACGYLSTIFFIVTVSIL. The Perinuclear space segment spans residues 101–122; that stretch reads KLTIWAPFSSVQDSLAWWIYPN. Residues 123–143 traverse the membrane as a helical segment; the sequence is AWASIIFVGIASVAMSLFSII. Residues 144-159 lie on the Cytoplasmic side of the membrane; that stretch reads KFCKVDQLPRLAATDT. The chain crosses the membrane as a helical span at residues 160 to 180; that stretch reads FALAGVALEFVTRLTFVYTAF. Residues 181–190 lie on the Perinuclear space side of the membrane; it reads CVADFSFSRE. The chain crosses the membrane as a helical span at residues 191–211; sequence FAFVAISLAIAISSALVVFRS. Residues 212–255 are Cytoplasmic-facing; the sequence is DYQLNFSHIQVNSVKTLIDFGTSLPYANISEICGIDAAISYTAA. Residues 256-276 traverse the membrane as a helical segment; sequence VALILVVGPMVSGFSAWWLLL. Residue Asn277 is a topological domain, perinuclear space. Residues 278 to 298 traverse the membrane as a helical segment; that stretch reads IPFHVVLFGLCFTQQFYSKIS. Topologically, residues 299 to 588 are cytoplasmic; that stretch reads MKIVNQIVMK…IRMICLTDEL (290 aa).

It belongs to the NDC1 family.

It is found in the nucleus. It localises to the nuclear pore complex. Its subcellular location is the nucleus membrane. Component of the nuclear pore complex (NPC), which plays a key role in de novo assembly and insertion of NPC in the nuclear envelope. Plays a role in postmitotic nuclear pore complex assembly potentially by promoting localization of nuclear pore complex proteins to the nuclear rim. The sequence is that of Nucleoporin ndc-1 from Caenorhabditis elegans.